The chain runs to 243 residues: MAHITRFEAPWFLNLSKKEYKWTIRANPGPHKLSESIPLALLLKHYLNVAETTREAKRLVVEGKIMVDGRVRKDYKFPVGLMDVISIPSSDLYFRIVPDNIKYLMPVKISKEDAKYKFVRIVNKTTNKNGNIQLNLEDGRNILIPKEKVPEMNYPTLTTLKIEIPSQNIIKSYELSEGKYAIIIGGRNVGLHGVIKTIQYAKYKKRKYSIVTIEQKNGESVQTNLQNVMVIGDSEIDPNVGVR.

The S4 RNA-binding domain occupies 37–99; it reads IPLALLLKHY…SDLYFRIVPD (63 aa).

Belongs to the eukaryotic ribosomal protein eS4 family.

This chain is Small ribosomal subunit protein eS4 (rps4e), found in Sulfurisphaera tokodaii (strain DSM 16993 / JCM 10545 / NBRC 100140 / 7) (Sulfolobus tokodaii).